Here is a 340-residue protein sequence, read N- to C-terminus: N-acetyl-gamma-glutamyl-phosphate reductase (340 aa).

Residue Cys-146 is part of the active site.

The protein belongs to the NAGSA dehydrogenase family. Type 1 subfamily.

It localises to the cytoplasm. It carries out the reaction N-acetyl-L-glutamate 5-semialdehyde + phosphate + NADP(+) = N-acetyl-L-glutamyl 5-phosphate + NADPH + H(+). Its pathway is amino-acid biosynthesis; L-arginine biosynthesis; N(2)-acetyl-L-ornithine from L-glutamate: step 3/4. Catalyzes the NADPH-dependent reduction of N-acetyl-5-glutamyl phosphate to yield N-acetyl-L-glutamate 5-semialdehyde. This is N-acetyl-gamma-glutamyl-phosphate reductase from Streptococcus thermophilus (strain ATCC BAA-491 / LMD-9).